An 8892-amino-acid chain; its full sequence is MENPNNGQAHFEPSKLVLGRVAADLFDTDVDSLDWGKSFIMLGGDSILAIDFIVRCRDAGILVDMRDLLTAGTLAQLAESIAQQNTGAGNGVNGHANGNGMNGNGLHNEATIRNGSDDLTTSAAAAGRRLRFATMEIPENTDASIISTAMERIVDRHSALRSNWSISSTGKWIITTASGSGLKSRQFFYGEFAEATEVTDAFEWLRKALLSDELFPSGCLVIPSDAPGCSHTIVLAADANVVDALSMGLVLRELRETINGTQLELSSDFQFSDWIARGCQGLEAQVERANTTKSNSITDTGALKLNGNTRDNIDFQLSRLATERLFAAQTHAALRTSPVDIVNAAVSQSLGPRYRDTENVLTIISAYSIREEKDIPLDSIGCYEVETELAATAPVPGETLVHLVRQMRDARAGFSADSRSSTAIYVDCTRLCHFEEGDYSPWLSDPTPDHSPYVSLAMIAGQVHVSLHFGIARPDDKLIADRLRSCLDEIVDELAKAPRMGTLHDFPLVRWSYSALDGLARDLQTHGLDFGDIESIGPSTSVQESFFVSQAINPGSYVSHATLRLLPTSANVPRRVETEKVVRAWSDIVERHAMLRTAFAESNDRPGKFDQLVFKPTALPPRVIVISSSAETSIVSPFTAGRFESPLRLCIYEINAEELRLELEISHALVDGHSAKILLHDIRASYLQSAYFSQSAPLPYTVFASRQQATLSEGEASAGITYWTSYLNEASESHLPLITTNPQLKDLETTRCSVSVPDGKLRAVCGELSITPANLFHVAWALALRRIILSDRITFSYIVSGRNSDADGVEATVGPFVNTLPFALALNPENSIADVLGSAKQDWQNGLQFQNIPIADLAAAKTRSLKRLGNTLLSIEREGSNTHPFTEGTYMSLDARTSAADFDLIANIRFNEQRINLSVEYWASRIAGPVAKAQMAAFEDAVSFLLEGVDLSVRDFPSHSPQDRAAFIRWNSTKPARLESCVHELVVEKMAEQPEALAVSSWDGELTYGELERASRRLAYHLVEKGVGPEVMVGMCMEKSKLGVVAMVATLLAGGGLVPLGVSHPLARIEGIVKDAASPLILVDRVHEERLAELGSYTELVAVDSFFDNASSTAIPSSGPFTSVGPDNVAWMIFTSGSTGKPKGVVLEHGSLATSILYHGRRLDIQPHDRLLQFAAFTFDAAIQEIITALAFGATTCIPSESDRMDRLSNYLAESKVTIATLTSTVAALVRPQETPTVRTIILMGEAVQAKVVDQWIDYATVINAYGPSECCIHSTCRPVTDSSASLNIGTAIAGATWVVNPTNINQLVPLGGQGELLLEGPLLARGYLNDSVKTAQAFVTDPAFVRELELGSNQHRMYRTGDLVQQNTDGTLTYLGRIDSQIKIRGQRVEIGEIEYHIGKQGGVHDAVVLYMRQGPLADRLVAAVNLGESSSVDRPQTSTVQVVSEDHMANARLRLREVQHGLSRQVMHYMVPSIWLPLSAMPMNQSGKTDRRALTDWIKSLSSDDIAALSNGGDADDVDDISATAVERELRQIWSEVLAVPLGSVTYSSSFFSLGGDSITAMQVVSASRSRGILITVRKVLDCQTIPELAAEVQATQNSDYAAVPEGAIALSPIQQMYFESIAADGLRADNEHCFNQGVLLHVTRQITLAELTRALDMAVAKHAMLRARFQYSQEQGWQQRIEREVTGSYRLCAHTAGDTEMSGIVAQSQSTLDIENGPVFAADLIEREDRQVLHLVAHHLVIDLVSWRILLRDLEEVIVNQKLPNPSSLSFPTWLGRQKESLSKVSNVLDTLPMIVPKTNWTYWGLTPGQETFGSRSSTQARCDIETTSLLTGGANSPLKTEPVEILLAGLLLSFQQVFADRPVPTVFTEGHGREAPDDGTDLSETIGWFTTMSPIYVSFTEASSNGAIDVLRQVKDQRRRIPGRGVPYFGSRFLTAQGKEQFAGHGPAEIMFNYTGRFQQLERDDALFHFDRDNNSSTMARAGDLVKLFAALDVAITIEAGKLCITVHYSNQSRCQEGIRRWVEVYGQTVKSLVNALNTVEPMATATDFPLARLSDSDMETIEGQYLPMIGLTSSAEIEDILPCSPIQQGILLTQLQSPSTYCIYQTCRIVPSGDAPVSADRLIAAWREVVSRHSILRTVLLEPLQGQENFIQVVLRHPEIGIIKKDGITDGVTAAEWLASRPSLDVSILGRPPHLLTVLTTVSGEVYCRFDISHALVDASSVTLIMRDLMDAYDEEKSQSAVSGSKYSTYVAFLQGRDSQDDLQYWTSLLQDAEPCLLPPNDPTHDAGDQPTIKKVSTRIDDIGKLHQFRDKYGVSVASIFQLSWALVLAMQTCSRNVSFGNLSSGRDVPISGVQELVGPMINMLVCHLDLNWGEGVSEAARKLQSQSTEAFEHQRTSLAAIQHGLGLSRNQPLFNSTLSYKRQASTSSGRASSITLEGLTWEDPTEYDVHINIEASSTSIDINMQYSTAAFSETTTKKLVDSLVHAVFAVCGGGDRALGQLRLLLPAEEAKLCEWNSVIPPRVERCVHELVLDRMVSQPEALAVSAWDGDLTYAELNHSSYQLAHHLVAERGIGPEVMVGLCMDKSKWAIVAMIAVLRAGGTLVPLGVQEPFSRIEMITGETGTPLVLVDRHHEQRVAGLDTQLFTVDYFFDAVSPISMLPPFAELSATRPDHAAWVIFTSGSTGRPKGVVLEHGSVATSILAHGPAIGIQIQDRVSQFAAYTFDVSIAEIMTTLTFGACVCVPSEDDRTNRLTQFLSESEVSIATLTSTVAALVQPDKTPKIRTLVLTGEAVQPKVVDQWMHRATVINAYGPAESSIWTTGKVIENALDATNIGTPLAGAFWVVNPDSVGQLVHIGELLIESPLLARGYLNDPVKTAASFITNLELLKNLGLGIGSRRMYRTGDLVRQNQDGTITYLGRRDTQVKIRGMQDAVVLYMNQGALAGRLIAFIVSSDTLAASHDQSKPQSSASIQRVHEEQNETADIWLKDVQQNLSQLVMHYMMPSVWIRLLAIPINASGKTDRLGLFRWVESLSAEDTAALTDAGAIEGEDIDESSATPIERELRQIWSEVLDVPISRVTYSTNFFSLGGDSITAMQVVSACRARGILVTVRKVLDCQTIPELAANSQTGREDAAHLARIPEGVFGLSPIQQMFFDEIAGDGLRADMDYRFNQAVSLYTTQRIEKTDLIWAINALVSKHAMLRARFRYTQDNAWQQWIEKDITGSYRFQDHTVADVELMQNLIEKSQATLDLEHGPVFAIDFIERQDRQGRQVLHLVAHHLVIDLVSWRILIRDLEELLVHHKLPNPTSLSFPVWLERQQDSLNRLVTETEEGADKSLEETLPVVVPNANWGYWGLVPGNDIYASLSTIEVQCGSATTSLLSGNANNALKTEPVDILLAALISSFQDVFADRSMPAVFTEGHGRETEEEEIDLSDTVSWFTTMVPVHVPQGAAKNAIEVLRKVKDQRRRLPGKGLPYFSSRYLTSHGREKFASHGPAEIIFNYLGRFQQLERDDALFHIEEDDTSASSQFGPLVKLFSVLDVSAGVEAGQLSIKVRFSRESLHQSAIKQWVKLYGDTVKTLVEELTMVPLTLTATDFPLARLSDSDWELIEGQYLKTEMGLSSTKEVEDILPCSAIQQGILLTQLQSPSTYCIHQTCRILPTDHTRPVSIQRLVVAWHQVVARHSILRSVLVEPLPAQESFLQIVLREPQIDVQITDGEDIRDEEAVEWLASQSTLDITKLSRPPHRLIILKTNTDNVYCRFDVSHALVDASSVALILRDLIAGYEGELGSSGGSNYSDYVAFLENRQQHNDLQYWKSLLADAEPCLLPLQQPVHEASQAHLGHVIDQLDDITMVHQFRDRHNVSIASICQLSWALVLANWTGSRNISFGNLSSGRDVPIPGVQELVGPMINMLVCNLFLDWDASTTIGGLARKLQSQSTESFEHQRASLASIQHELGFSKDQPLFNSTVSYRRQVSPSSDSKPAAIRLEAVISVDPTEYDVHVNIDASSTSLEFNLQYSTAVLSKAAATRLAESLVQAVRIVAQNVDRPLRELTSSLLPVGDKLQLQEWNSAVALPVQRCVHELVSDRIYTLPEALAISSWDGDMTYDQLGDTSRRLASYLVEQGVGPKTMVGLCLDKSKWAIVGMLAVLFAGGAVVPLGVQHPVSRIRSIVEDTNAPIILVDDIHEKRLATMTAHTQLLSVESFFRASQPVSLQSGKSTVRFEDPAWIIYTSGSSGVPKGVVLQHDALATSILAHGPVIGVKPFDRLSQFAAYTFDVSIAEIMTALSFGACVCVPSEQDRMERLPSFLKDANITIATLTSTVAALIQEDIPTIRTMVLTGEAVQSKVVDRWVQQATVINAYGPSESSIWASCNIVKSGTDALNIGKPLAGAFWVANPDNVGQLVVRGAPGELLIEGPLLAREYLNDPEKTSTAFVSDPKFMQELGLIPGRRLYRTGDLVQQNEDATLTYLGRIDSQIKIRGQRVEVAEIESQIVRLLPGAREAVVDLVRPEGEVHDGPLILVAVIEHSDASPSLDGEVFSLDGITQIPDNALQALGKLDNDLGSVLPPYMVPAAFLLVSKLPINASGKLDRRVVRQKLQSTSRDTIVRFSGSRDSIKAAPTTDLERKLQILYSTALRLVPEAVGLDDSFFKLGGDSVAAMKLTAVARAQNVSVSVADIFRWPRLADLSRVVEEKCSRDIGPLDKDPAPFSLWPELTETRTEIQTDDHNDKTRQARLLENIATRCNTSADQIEDVYPCSPMQAGLMAITAQRPEAYVIQRVFKLHDDLSTQQLKDAWTRLTGKLSVLRTRIIPSASAQADALQVVIQEAPVWQDCRSLEVYLATDRATPITYGRALSRTAVVDDPAGRYFIWTVHHSIYDGWSVARTMEMLTQLLSGQSTFSPAPVSRFINYLVQQDKDQIANFWNGHFEGANWVRYPAIASPQYRAKPRDTLQSQMHVNLETGGPATMSTLLRAAWALLVATNTGANDAAINVVLSGRMAPIDAVMDVISPLVTTVPFYVSASKQQSVRVFLETIHRRATEMIPYEHTGLQNIRALVPGLGSEFDPGHTFVVQPAGESESADLPMFKMDVERDATSFDAFDAYALTVECTVGGQNPGDVTIEVRYDRAVLAVDTVQHLIVQLAHIVQQLAQNAATDKPLSELQLLTDEDCDQLREWNSVVPPRLERCLHDLILETMTSYPTAPAISSWDGEMTYSELNDASQYLAYHLVDQGIGPEVMVGLCMDKSRWAVVAILAILRAGGVVVPLGIQQPLLRIEGIIQDTSCPLILVDRSQEHRLASLSDRASLFSVSSFFDAVPTPLAKSHNLSTKALPSVKPDHSAYVIFTSGSTGVPKGIILEHGALATSIIAHGTEFGMDIKNCDRVLQFAAYTFDVAIQDIIATLSFGACLCIPSEHDRMNRLVPYISEAKVTFAILTPTVAALIQPQDVPSIRTLILGGEALPAKVVDQWIGHANIINGYGPSECSIHSTCHKVQHSSEASIIGRGITAKTWVIDSSNSDQLVPIGAIGELIIEGPLLARGYLNDPLMTANSFITDPAFVQQLGFSPNRRMYRTGDLVQQNMDGSLVYLGRRDTQVKIRGQRVEVGEIESHILDLLPNAREAIVDVIQAAAEDQDVSPMLVAVIETDVSDTEVLASDTQMELYSPSQITQKMREGLDGLDTDLGLVLPAYMVPTVYLLASKLPLNASGKLDRRAVRDQLMLLPRHVLSSFSGLANSKQMPTTPMEQKLQTLYTSVLALKPEAVGISDSFFRLGGDSVAAMKLTAAAHAQGIPLTVADIFQWPRLADLAEAMEEKGGYGSSSAGQKDPEPFSLWPELQTGATEKSRLLADVAVQCGVSIDKIEDVYPCSPLQAGLMTITAQRPEAYVVQRVFKLQGGISTQTLKAAWTQLITDLPILRTRIIPSVQATALQVVLRETPIWQAGISLEDYLTADRAIPMIYGGALSRTAILEDGSHRHFIWTVHHSIYDGWSMAKTMEMLEGLLSGSTLSHPVSVPVSRFIGYLTQKDKDQTAMFWQKHLEGANWTRYPELPSQQHIINPRVTSHRRLRIPKIAGSTTFIVLRAAWALLVASKTGADEAVINVVLSGRAAPVKNLLHLVAPTITTVPFHVSTSTSQSIRDFLANIQGQATDMIPHEHTGLQNIRRMVSSLGPDFDPGHIFVVQPAAEMESTVTNSHLQIEREASSMDAFHAQALTIECTVGHDTRDVEVELRFDDAVIAADDVEQLLDQFNHLVQQLAENADKKLPLDRLQLLSPGQMAQICRWNSSIPSRVDRCIHELVMDQMTTRPAATAVTACDGDLTYRQLDDLSFQLALHLIETGIGPEVIVGVCMSKSKWAVVAMLAVLRAGGVVVPLGTRQPLGRIETIITDTAAPLILADRPQEQQLKGLQAPTQLLVVESFFEKTAKPAQNTGLQVFARSDNAAWIIYTSGSTGTPKGVVLEHGALATSILGHGKAYGLQSDDRILQFAAYTFDAAIQEIMTTLAFGACICIPSEQDRVERLTSYVAENRITMATLTSTVAALVRPRETPTVRTIILVGEAVQANVVDQWLQQAKVINGYGPSECSIASTCREIQNSSSALNIGTAIAGGLWVVKPSSTELAAFGSPGELLIDGPLLARGYLNDPTKTAASFITDTVFLKDLGLSGRRLYRTGDLVQQNRDGSLTYLGRIDTQIKIRGQRVEIGEIESQIEKHPTVRDAVVLYPRQGPLANRLVATVVLGETSTDSQSTAIQQISQEYQGYANTQFHELQRILSENLVYYMIPSVWVPLAAVPVNTSGKTDRLAISRWVQSLTEDEVSTLTSEETEYIDEELTTTIERQLRQIWSEVLDVPLHKITYTTTKFFSLGGDSITAMQVVSACRARGILVTVRKALDYQTIRELATQTQTTENSSSITKIPEGNFQLSPIQQMYFADIAADGIRADGEYRFNQGVTLHVTRQIDWEDLAQALDAIVSKHAMLRARFSHSQNGWHQWVEKHVPASYRLCKHTASDSRSMQDIIEHSQVSLDLEHGPVFAADLIHRPDMQKEDGQDGQVLHFVAHHLVIDLMSWRILLQDLETLLVYDQPLKMDILSFPTWLERQRQSLSKSLDNNIDPLPVTIPKADWEYWGLVPRQERSVDLVNIQTKCDSATTSILLSDAANSALKTEPVEILLAAFYHSFREHFSDRPVPPIFTEGHGREAMDGETNLTETVGWFTTLSPIYIPPSENNNKAIDVLRQLKDQRRRIPSRGMPYFASRFLTPEGRERYADHGPAEIVFNYLGRFQQLEREDALFRIDNGDDAISVAPVGNLVNISAVLDISATVHEGELCINIRFSPKTKHQKTLQRWAQSYSCAIESLVGELATVTPGATATDFPLARLSDNDMSLIENQYLTTMGVSSSQVQDILPCSPIQQGILLTQMQLPRAYLIYQTCRITSSNHNRPVAADRLIKAWKQVVARHSVLRTILMEPLPNQEKFVQIVLADPEIDVVCVDDVLDEDATQWFEAQSQLDPSDRRRPPHRLTTLATTSGEIYCRFDINHALVDASSMTLIIRDLIDAYGNGFTTGGSNYSSYIQFLQGKHQQDDLQYWKSALHNAEPCLLSPQDPTQSDAHGKILSVSKRIEDLTMLNIFRDTHGVSIASVCQLAWAVVLANWTNSQNISFGNLSSGRDAPIPDVQELVGPMINMLVCHLQVDWNANVSDVARKLQSQSAEAFEHQGVSLAAIQHELGLSRGQPLFNSILSYKRQVPTSSSTAEIIFEGLDSEDPTEYDINIHVVASPTDLEFDILYSNTLLSESAASRLADCLIQAVRAISENASRQLGQLNLLPAGDANQICKWNSDMAEPREACLHDLVIQQMAAHPTAQAVYAHDGELTYGDLDKFSRQLACYLVNQGVGPEVMIGLCMDKSKWSVVAILGILRAGGAVLPLGVSNPLARVEAILKDTAAPLAIVDEAQECRLGALEADIKLININSFVNAVPSAVEGLPVSEPCTSVQPNNIAWCQFTSGSTGTPKGVILEHGALATSIYSHSQRFGLRPGERLLQFAAFTFDATIYDIMAPLSFGGCTCIPSENDRMNRLGPFISEANVSFAFMTPAVVSLLQPKDVPSIKTLIVGGEIFTSKTIDQWIQHADVKEAYGPTECSIFSTCNDLLDSSQVRNIGMAVAARTWVINPFSNGQLVPISTPGELLIEGPLLSRGYLNDPEKTAGSFLVDPAFVKELGLSPGRRFYRTGDLVQQNSDGTLQYLDRIGTQVKINGQRLEIGEIESQILLLLPNAKYAYVCKQGSSLIGVIEATSSSRAAVVGSHSIITPNMEQQKSFEYIEASLRERLPSYMIPSTFLVINSFPLTDSGKLDRRRVVNLLDAIPSDKWLEYTARSQIYYAPVGRNEEILSELWAACINLEKKSVSRMDNFFELGGDSITAMSLVQRLAKLGLRIHVSEIFKDPVLCAMAARVTADIDENGEYERFSLVSSEERAQIVKENMSPARRQLNHFAFDATGPCDTSHLTSAIIQLVTKIESLRTGFAQTHKQKLLQVVYAKWEPAVRVFKTDKSPGAFYEETLERDMFIEPNLARPMFDVAIIITRTTQQVRIVFRMSHALYDGATLHQVWAALEAIMAGQTIGNFAPVGPYFQSLRAQTTNETEEYWGELVQGAAISSVSAGAEPRVSRLGIFSSKPIMLPRSRQFDFTLAVAVKAAWAIVLSHHVTSNDVVFADVLTGRTVVHPSVADVVACCARAVPCRVTCEPEWTAKTLLEQIKQQQVDSMAHEGLELQQIAQRFMGWSEEVESDAPDMRVSMVNHTKAQKQTMSLGSTVYERVTVDLSNSYASVDFAIESVEQEDGSLSLGMAYASDRISEQLARTLSNGFQAVLLEIIEDSGCNVSHLDDILRDLVVKQ.

The 74-residue stretch at 12–85 (EPSKLVLGRV…QLAESIAQQN (74 aa)) folds into the Carrier 1 domain. The residue at position 46 (Ser-46) is an O-(pantetheine 4'-phosphoryl)serine. Positions 88–112 (AGNGVNGHANGNGMNGNGLHNEATI) are disordered. A compositionally biased stretch (low complexity) spans 93–108 (NGHANGNGMNGNGLHN). The interval 567–956 (PTSANVPRRV…EGVDLSVRDF (390 aa)) is condensation 1. Residues 989 to 1386 (KMAEQPEALA…GRIDSQIKIR (398 aa)) are adenylation 1. Residues 1523–1599 (ISATAVEREL…ELAAEVQATQ (77 aa)) form the Carrier 2 domain. Ser-1560 carries the post-translational modification O-(pantetheine 4'-phosphoryl)serine. The interval 1609–2039 (GAIALSPIQQ…YGQTVKSLVN (431 aa)) is epimerization 1. The interval 2083–2518 (EDILPCSPIQ…LLLPAEEAKL (436 aa)) is condensation 2. The interval 2543-2934 (SQPEALAVSA…GRRDTQVKIR (392 aa)) is adenylation 2. The region spanning 3061 to 3137 (SSATPIEREL…ELAANSQTGR (77 aa)) is the Carrier 3 domain. Ser-3098 is subject to O-(pantetheine 4'-phosphoryl)serine. Positions 3153–3590 (LSPIQQMFFD…GDTVKTLVEE (438 aa)) are epimerization 2. A condensation 3 region spans residues 3634–4061 (EDILPCSAIQ…NVDRPLRELT (428 aa)). An adenylation 3 region spans residues 4098-4488 (TLPEALAISS…GRIDSQIKIR (391 aa)). The region spanning 4627–4703 (APTTDLERKL…DLSRVVEEKC (77 aa)) is the Carrier 4 domain. An O-(pantetheine 4'-phosphoryl)serine modification is found at Ser-4664. The interval 4760-5181 (EDVYPCSPMQ…LLTDEDCDQL (422 aa)) is condensation 4. The interval 5205 to 5605 (TSYPTAPAIS…GRRDTQVKIR (401 aa)) is adenylation 4. The 77-residue stretch at 5745-5821 (MPTTPMEQKL…DLAEAMEEKG (77 aa)) folds into the Carrier 5 domain. Ser-5782 bears the O-(pantetheine 4'-phosphoryl)serine mark. Residues 5868–6285 (EDVYPCSPLQ…LLSPGQMAQI (418 aa)) are condensation 5. The segment at 6307–6700 (QMTTRPAATA…GRIDTQIKIR (394 aa)) is adenylation 5. The Carrier 6 domain occupies 6834–6911 (ELTTTIERQL…ELATQTQTTE (78 aa)). At Ser-6872 the chain carries O-(pantetheine 4'-phosphoryl)serine. Positions 6923 to 7360 (NFQLSPIQQM…SYSCAIESLV (438 aa)) are epimerization 3. The condensation 6 stretch occupies residues 7403–7834 (VQDILPCSPI…LLPAGDANQI (432 aa)). Residues 7855 to 8253 (QQMAAHPTAQ…LDRIGTQVKI (399 aa)) form an adenylation 6 region. The Carrier 7 domain occupies 8380 to 8456 (APVGRNEEIL…AMAARVTADI (77 aa)). Ser-8417 carries the O-(pantetheine 4'-phosphoryl)serine modification. The condensation 7 stretch occupies residues 8490–8878 (HFAFDATGPC…EIIEDSGCNV (389 aa)).

The protein belongs to the NRP synthetase family.

It functions in the pathway secondary metabolite biosynthesis. Nonribosomal peptide synthetase; part of the gene cluster that mediates the biosynthesis of the lipopeptides W493 A and B. W493 A and B consist of six amino acid residues D-allo-thr, L-Ala, D-Ala, L-Gln, D-Tyr, and L-Val/L-Ile linked to a 3-hydroxy-4-methyltetradecanoic acid polyketide chain. The biosynthesis starts with formation of the linear polyketide chain by the highly reducing polyketide synthase PKS40. The gene cluster contains a putative acyl-CoA ligase (FPSE_09184) for formation of a CoA thioester polyketide. The thiol bond could be hydrolyzed by the putative thioesterase (FPSE_09186) and then accepted by the first T domain in module 1 of NRPS32. The second T domain is responsible for accepting a threonine, which is adenylated by the A domain and epimerized to the D-allo-threonine formed by the E domain. The five successive modules incorporate Ala, Ala, Gln, Tyr, and Val/Ile into the final product, which is released by cyclization. In Fusarium pseudograminearum (strain CS3096) (Wheat and barley crown-rot fungus), this protein is Nonribosomal peptide synthetase 32.